The primary structure comprises 432 residues: uncharacterized protein (432 aa).

SIS domains lie at 105-244 (WLTE…DLVS) and 277-422 (CDKK…VDLP).

This is an uncharacterized protein from Saccharomyces cerevisiae (strain Lalvin EC1118 / Prise de mousse) (Baker's yeast).